Here is a 343-residue protein sequence, read N- to C-terminus: Adenine deaminase (343 aa).

The Zn(2+) site is built by His-17, His-19, and His-197. The active-site Proton donor is the Glu-200. Asp-278 contacts Zn(2+). Asp-279 contacts substrate.

The protein belongs to the metallo-dependent hydrolases superfamily. Adenosine and AMP deaminases family. Adenine deaminase type 2 subfamily. Zn(2+) is required as a cofactor.

The enzyme catalyses adenine + H2O + H(+) = hypoxanthine + NH4(+). Its function is as follows. Catalyzes the hydrolytic deamination of adenine to hypoxanthine. Plays an important role in the purine salvage pathway and in nitrogen catabolism. The protein is Adenine deaminase of Rhodopseudomonas palustris (strain BisB18).